Here is a 441-residue protein sequence, read N- to C-terminus: Endothelin receptor type B (441 aa).

The first 26 residues, 1–26, serve as a signal peptide directing secretion; that stretch reads MQPPPSLCGLALLALVLACGMAEVWG. The Extracellular portion of the chain corresponds to 27–100; it reads EEREMPSAPA…RPTEIKDTFK (74 aa). The tract at residues 30 to 90 is disordered; sequence EMPSAPATPP…APRRTPPPCQ (61 aa). A compositionally biased stretch (polar residues) spans 47–65; sequence LTPSTKTSWPRDSNASLPR. A glycan (N-linked (GlcNAc...) asparagine) is linked at Asn60. Residues 101 to 125 traverse the membrane as a helical segment; sequence YINTVVSCLVFVLGIIGNSTLLRII. At 126-136 the chain is on the cytoplasmic side; it reads YKNKCMRNGPN. A helical membrane pass occupies residues 137–162; the sequence is ILIASLALGDLLHIIIDIPINVYKLL. Topologically, residues 163 to 174 are extracellular; sequence AEDWPFGAEMCK. Cys173 and Cys254 are joined by a disulfide. A helical transmembrane segment spans residues 175-196; it reads LVPFIQKASVGITVLSLCALSI. The Cytoplasmic segment spans residues 197–217; it reads DRYRAVASWSRIKGIGVPKWT. A helical transmembrane segment spans residues 218 to 242; the sequence is AVEIVLIWVVSVILAVPEAIGFNLV. The Extracellular segment spans residues 243–270; sequence TIDYKGSYLRICLLNPTQKTAFMQFYKT. Residues 271–295 form a helical membrane-spanning segment; that stretch reads AKDWWLFSFYFCLPLAITAFFYTLM. The Cytoplasmic segment spans residues 296-323; the sequence is TCEMLRKKSGMQIALNDHLKQRREVAKT. Ser304 bears the Phosphoserine mark. The chain crosses the membrane as a helical span at residues 324–349; that stretch reads VFCLVLVFGLCWLALHLSRILKLTLY. Over 350-361 the chain is Extracellular; that stretch reads DQNDPNRCELLS. Residues 362–388 traverse the membrane as a helical segment; the sequence is FLLVLDYIGINMASLNSCINPIALYLV. Residues 389-441 are Cytoplasmic-facing; sequence SKRFKNCFKSCLCCWCQSFEEKQSLEEKQSCLKFKANDHGYDNFRSSNKYSSS. S-palmitoyl cysteine attachment occurs at residues Cys402 and Cys404. The residue at position 418 (Ser418) is a Phosphoserine. Tyr438 is modified (phosphotyrosine). Phosphoserine is present on residues Ser439, Ser440, and Ser441.

It belongs to the G-protein coupled receptor 1 family. Endothelin receptor subfamily. EDNRB sub-subfamily.

Its subcellular location is the cell membrane. Non-specific receptor for endothelin 1, 2, and 3. Mediates its action by association with G proteins that activate a phosphatidylinositol-calcium second messenger system. The sequence is that of Endothelin receptor type B (EDNRB) from Oryctolagus cuniculus (Rabbit).